The following is a 38-amino-acid chain: Photosystem II reaction center protein X (38 aa).

Residues 8–28 (FLWSLVAGAVVLGALFGAIIF) form a helical membrane-spanning segment.

It belongs to the PsbX family. Type 1 subfamily. As to quaternary structure, PSII is composed of 1 copy each of membrane proteins PsbA, PsbB, PsbC, PsbD, PsbE, PsbF, PsbH, PsbI, PsbJ, PsbK, PsbL, PsbM, PsbT, PsbX, PsbY, PsbZ, Psb30/Ycf12, peripheral proteins PsbO, CyanoQ (PsbQ), PsbU, PsbV and a large number of cofactors. It forms dimeric complexes.

Its subcellular location is the cellular thylakoid membrane. In terms of biological role, involved in the binding and/or turnover of quinones at the Q(B) site of photosystem II (PSII). PSII is a light-driven water plastoquinone oxidoreductase, using light energy to abstract electrons from H(2)O, generating a proton gradient subsequently used for ATP formation. This chain is Photosystem II reaction center protein X, found in Synechococcus sp. (strain JA-2-3B'a(2-13)) (Cyanobacteria bacterium Yellowstone B-Prime).